A 261-amino-acid chain; its full sequence is NAD(P)H-quinone oxidoreductase subunit K, chloroplastic (261 aa).

[4Fe-4S] cluster-binding residues include Cys64, Cys65, Cys129, and Cys160.

It belongs to the complex I 20 kDa subunit family. In terms of assembly, NDH is composed of at least 16 different subunits, 5 of which are encoded in the nucleus. [4Fe-4S] cluster is required as a cofactor.

The protein resides in the plastid. It localises to the chloroplast thylakoid membrane. The enzyme catalyses a plastoquinone + NADH + (n+1) H(+)(in) = a plastoquinol + NAD(+) + n H(+)(out). The catalysed reaction is a plastoquinone + NADPH + (n+1) H(+)(in) = a plastoquinol + NADP(+) + n H(+)(out). NDH shuttles electrons from NAD(P)H:plastoquinone, via FMN and iron-sulfur (Fe-S) centers, to quinones in the photosynthetic chain and possibly in a chloroplast respiratory chain. The immediate electron acceptor for the enzyme in this species is believed to be plastoquinone. Couples the redox reaction to proton translocation, and thus conserves the redox energy in a proton gradient. This Physcomitrium patens (Spreading-leaved earth moss) protein is NAD(P)H-quinone oxidoreductase subunit K, chloroplastic.